Reading from the N-terminus, the 332-residue chain is 2,3-diketo-L-gulonate reductase (332 aa).

H44 functions as the Proton donor in the catalytic mechanism. Residues 168–174 (ITMVDMS), 224–225 (WK), and 304–306 (GHE) contribute to the NAD(+) site.

The protein belongs to the LDH2/MDH2 oxidoreductase family. DlgD subfamily. Homodimer.

Its subcellular location is the cytoplasm. The catalysed reaction is 3-dehydro-L-gulonate + NAD(+) = 2,3-dioxo-L-gulonate + NADH + H(+). It catalyses the reaction 3-dehydro-L-gulonate + NADP(+) = 2,3-dioxo-L-gulonate + NADPH + H(+). In terms of biological role, catalyzes the reduction of 2,3-diketo-L-gulonate in the presence of NADH, to form 3-keto-L-gulonate. In Salmonella newport (strain SL254), this protein is 2,3-diketo-L-gulonate reductase.